Consider the following 431-residue polypeptide: Trigger factor (431 aa).

Residues 158-243 (GHLVALETWS…VIEVSEPVLL (86 aa)) enclose the PPIase FKBP-type domain.

Belongs to the FKBP-type PPIase family. Tig subfamily.

Its subcellular location is the cytoplasm. It catalyses the reaction [protein]-peptidylproline (omega=180) = [protein]-peptidylproline (omega=0). In terms of biological role, involved in protein export. Acts as a chaperone by maintaining the newly synthesized protein in an open conformation. Functions as a peptidyl-prolyl cis-trans isomerase. This chain is Trigger factor (tig), found in Xylella fastidiosa (strain 9a5c).